Reading from the N-terminus, the 597-residue chain is DNA mismatch repair protein MutL (597 aa).

It belongs to the DNA mismatch repair MutL/HexB family.

Its function is as follows. This protein is involved in the repair of mismatches in DNA. It is required for dam-dependent methyl-directed DNA mismatch repair. May act as a 'molecular matchmaker', a protein that promotes the formation of a stable complex between two or more DNA-binding proteins in an ATP-dependent manner without itself being part of a final effector complex. This Rhodopseudomonas palustris (strain HaA2) protein is DNA mismatch repair protein MutL.